A 1362-amino-acid chain; its full sequence is MAYSFTEKKRIRKDFGKSQSILAVPYLLATQMDSYREFLQESVPPAARKETGLEAVFRSVFPMESYSGNAMLDYVSYRLEKPVFDVVECRQRGLTYCAGLRVRLRLAVMEKDDTTGAKRVKDVKEQDVYMGELPLMTEHGSFVINGTERVIVSQLHRSPGVFFDHDRGKTHSSGKLLFNARIIPYRGSWLDFEFDPKDHVYARIDRRRKLPATTLLRALGYSTQDILEMFFDMETFRLIDGDLRYVLIPQRLQGEVAAFDIVSPETGDVLVQAGKRITVRQTKALSEVQGLHEIPVPDSFLLGKVVARDIVHPETGEVVVQANEPVSGELLDALRKMPSLTLHTLYLNELDRGPYISETLRIDTSRDAHDAQMEIYRLMRPGEPPTKDAAQNLFQGLFFSPDRYDLSAVGRMKFNRRVGRDEITGPGVLNDADIIAVLKVLVALRNGVGEIDDIDHLGNRRVRSVGELMENQFRLGLVRVERAVKDRLALAESEGLTPQDLINAKPIAAVVNEFFGSSQLSQFMDQTNPLSEVTHKRRVSALGPGGLTRERAGFEVRDVHPTHYGRICPIETPEGPNIGLINSLSCYARTNSYGFLETPYRRVVDRRTTDEVEYLSAIEEGNYMIAQANSTVDEHGVLTDELVSCRFKNEFTLANPDQVQFMDISPRQIVSVAASMIPFLEHDDANRALMGSNMQRQAVPTVRSDAPMVGTGMERVVAIDSGAAVVARRGGVVDIVDGARIVIRVSDEETLPEEPGVDIYNLVKYARSNQNTTLNQRPVVKVGDVVSRGDVLADGPSTEMGELALGQNILVAFMPWNGYNFEDSILISERVVAEDRYTTIHIEEFSVFARDTKLGPEEITRDIPNVAEGALRHLDESGIVVIGAELAPGDILVGKVTPKGETQLTPEEKLLRAIFGEKASDVKDNSMRMPAGMYGTVIDVQVFTRDGIEKDARAKSIEEHELARIRKDLNDQYRIVEEDSYQRIERQLIGKVAEGGPNGLAAGNKVTKAYLKDLPRAKWFEIRLRTEESNESLEQIRAQLEEQRQRLDAVLEEKRRKLTQGDDLSPGVLKMVKVHVAIKRHLQPGDKMAGRHGNKGVVSKIVPVEDMPYLADGTAVDIVLNPLGVPSRMNVGQILETHLGWAAKGLGKKIGAMLDSEVAMAEMRAFLAEIYNRSGKKEDLDSLTDQEIRELSANLRGGVPMATPVFDGASEEEIGDMLELAGLPRSGQVTLYDGRSGDAFDRPVTVGYLYMLKLHHLVDDKMHARSTGPYSLVTQQPLGGKAQFGGQRFGEMEVWALEAYGAAYTLQEMLTVKSDDVSGRSKMYESIVKGDFRMDAGMPESFNVLLKELRSLGIDIELEQSK.

The protein belongs to the RNA polymerase beta chain family. As to quaternary structure, the RNAP catalytic core consists of 2 alpha, 1 beta, 1 beta' and 1 omega subunit. When a sigma factor is associated with the core the holoenzyme is formed, which can initiate transcription.

It catalyses the reaction RNA(n) + a ribonucleoside 5'-triphosphate = RNA(n+1) + diphosphate. Its function is as follows. DNA-dependent RNA polymerase catalyzes the transcription of DNA into RNA using the four ribonucleoside triphosphates as substrates. In Acidithiobacillus ferrooxidans (strain ATCC 23270 / DSM 14882 / CIP 104768 / NCIMB 8455) (Ferrobacillus ferrooxidans (strain ATCC 23270)), this protein is DNA-directed RNA polymerase subunit beta.